The chain runs to 418 residues: Trimethyllysine dioxygenase, mitochondrial (418 aa).

Fe cation-binding residues include His-239, Asp-241, and His-386.

The protein belongs to the gamma-BBH/TMLD family. As to quaternary structure, homodimer. It depends on Fe(2+) as a cofactor. L-ascorbate serves as cofactor.

The protein resides in the mitochondrion matrix. The enzyme catalyses N(6),N(6),N(6)-trimethyl-L-lysine + 2-oxoglutarate + O2 = (3S)-3-hydroxy-N(6),N(6),N(6)-trimethyl-L-lysine + succinate + CO2. The protein operates within amine and polyamine biosynthesis; carnitine biosynthesis. Converts trimethyllysine (TML) into hydroxytrimethyllysine (HTML). The protein is Trimethyllysine dioxygenase, mitochondrial (TMLHE) of Gallus gallus (Chicken).